Reading from the N-terminus, the 147-residue chain is Hemoglobin subunit beta (147 aa).

The residue at position 2 (V2) is an N-acetylvaline. Residues 3-147 enclose the Globin domain; it reads HLTGEEKAAV…VANALAHKYH (145 aa). The residue at position 13 (T13) is a Phosphothreonine. S45 is subject to Phosphoserine. K60 carries the post-translational modification N6-acetyllysine. H64 provides a ligand contact to heme b. At K83 the chain carries N6-acetyllysine. H93 is a heme b binding site. The residue at position 94 (C94) is an S-nitrosocysteine. An N6-acetyllysine modification is found at K145.

The protein belongs to the globin family. Heterotetramer of two alpha chains and two beta chains. Red blood cells.

In terms of biological role, involved in oxygen transport from the lung to the various peripheral tissues. The sequence is that of Hemoglobin subunit beta (HBB) from Lagothrix lagotricha (Brown woolly monkey).